Consider the following 401-residue polypeptide: MSIILGIETSCDETGVGIVSGSTVLANEVASSSLRHKPFGGVIPEIAARAHLEYLPNLLELALETAQLCIKDIDGIAVTAGPGLVTSLSVGVSAAKALGLSTGTPVYGVNHLVGHAVSAFLDDYTNDGLGVIHRRDSIGSNGIENDASSTHSHTHTTQVNRHSNLCVYTPPRRVLRDVCKYMHVRDSVVLLASGGHSCLLKIHNNKISLLGETLDDAAGEAFDKIARLMGLQYPGGPAIEMLASSGNPNAVEFPRALLTHFEEHNRYSFSFSGLKTAVGRVVERIKSNPAHSIPKIEDIAASFQEAVADVLTAKTVAAALASDVDLIVMGGGVAANNRIREMLCERAKIHGLDVKIPPIALCTDNGAMIAAAGSWLMQLGYNPSHSRFSPVSIMPLTQMVV.

Positions 111 and 115 each coordinate Fe cation. Substrate-binding positions include 191-195 (LASGG), Asp-223, Gly-236, and Asn-336. A Fe cation-binding site is contributed by Asp-364.

Belongs to the KAE1 / TsaD family. Fe(2+) serves as cofactor.

The protein localises to the cytoplasm. The enzyme catalyses L-threonylcarbamoyladenylate + adenosine(37) in tRNA = N(6)-L-threonylcarbamoyladenosine(37) in tRNA + AMP + H(+). Its function is as follows. Required for the formation of a threonylcarbamoyl group on adenosine at position 37 (t(6)A37) in tRNAs that read codons beginning with adenine. Is involved in the transfer of the threonylcarbamoyl moiety of threonylcarbamoyl-AMP (TC-AMP) to the N6 group of A37, together with TsaE and TsaB. TsaD likely plays a direct catalytic role in this reaction. This is tRNA N6-adenosine threonylcarbamoyltransferase from Tropheryma whipplei (strain TW08/27) (Whipple's bacillus).